Here is a 234-residue protein sequence, read N- to C-terminus: Orotidine 5'-phosphate decarboxylase (234 aa).

Substrate contacts are provided by residues Asp-14, Lys-36, 63–72 (DMKLLDIDNT), Thr-118, Arg-179, Gln-188, Gly-208, and Arg-209. The active-site Proton donor is the Lys-65.

Belongs to the OMP decarboxylase family. Type 1 subfamily. In terms of assembly, homodimer.

The catalysed reaction is orotidine 5'-phosphate + H(+) = UMP + CO2. Its pathway is pyrimidine metabolism; UMP biosynthesis via de novo pathway; UMP from orotate: step 2/2. Its function is as follows. Catalyzes the decarboxylation of orotidine 5'-monophosphate (OMP) to uridine 5'-monophosphate (UMP). This Rhizobium meliloti (strain 1021) (Ensifer meliloti) protein is Orotidine 5'-phosphate decarboxylase.